A 481-amino-acid chain; its full sequence is Sucrose phosphorylase (481 aa).

Residues D49, H87, 191–193 (RLD), E234, 291–292 (HD), 335–338 (DIYQ), and R392 each bind sucrose. D193 (nucleophile) is an active-site residue. The active-site Proton donor is the E234.

This sequence belongs to the glycosyl hydrolase 13 family. Sucrose phosphorylase subfamily.

The protein resides in the cytoplasm. The enzyme catalyses sucrose + phosphate = D-fructose + alpha-D-glucose 1-phosphate. Its function is as follows. Intracellular catabolism of sucrose. Being intracellular, probably not involved in synthesis of extracellular polysaccharides. The protein is Sucrose phosphorylase of Streptococcus mutans serotype c (strain ATCC 700610 / UA159).